The chain runs to 325 residues: MKSTKTQPSPEREREPSFFQKLFGNLCSCFQDASIDEKPTYTPAKPVKKAPSVVQPRRVSRTLRSSESVHTNHGPERVFESPTPARTSISLESAISPNGTTNEQDIAQQGDMIDSHVHFGEQPTEPIDFADPPLPEVKRYGEGNWLLPPIAKEDEGKKCLILDLDETLVHSSFKYIEPADFVVSIEIDGLQHDVRVVKRPGVDEFLKKMGDMFEIVVFTASLAKYADPVLDMLDHSHVIRHRLFREACCNYEGNFVKDLSQLGRNLEDSIIIDNSPSSYIFHPSHAVPISSWFNDMHDMELIDLIPFLEHLARVPDVSTVLNLQL.

The tract at residues 37-85 (EKPTYTPAKPVKKAPSVVQPRRVSRTLRSSESVHTNHGPERVFESPTPA) is disordered. At S52 the chain carries Phosphoserine. Positions 62 to 71 (TLRSSESVHT) are enriched in polar residues. In terms of domain architecture, FCP1 homology spans 153–311 (EDEGKKCLIL…IDLIPFLEHL (159 aa)).

This is an uncharacterized protein from Schizosaccharomyces pombe (strain 972 / ATCC 24843) (Fission yeast).